The primary structure comprises 628 residues: MGLSRTMTAIQLNSSIPLGLPVPPHTPHAISVSLPTWSETVAYKEGIKHINDALLNGYPRMFIQLNVRKLSSLLEQKFGINGERCMLFPTYKVAEQCQLFMQARSVGARIVGLLICPEGKQNNRVIECKEPANLSESTSSASTNLYVVLFPPDMFSIANQFWQHSGQGISSRLTDHCLSILTENAAHANGSSLSPLTFPGNSHVAPEQLEVGHDVDLEGRCGGPLLADAAIAKQVLRQRIAGLLIRYGSCDYRAELCVGKKNLEGNQNSRDFADVTENDVYLFPTGMTAIWNAHQLALAVRPTAKSVCFGFPYSDTLKVLQKWGPGCHFFAGGTDSEIDELEIILEQEFARDSTKPPVLALFTEFPSNPLLCSPNLLRLRALADKYDFLLAIDETIGNFVNVEVLPYADILLTSLSKIFSGNANVMGGSLVLNPNGRHYTALKAHIAAHYQDIYYPEDAIHMEWNSRDFEQRIKIIDDNAEAICDFLRPHSVAAGATNAVIKEVFYPKYITPENYERCLTKGTNHDLSSSPSNGGGGYGGLFSLTFTSGAASAAFYDALSCFKGPSLGTNFTLACTYTLLAHFKELEWAAQYGVEAGLVRISVGTENTEALLRTIEAALGAAKEAKGL.

Y313 serves as a coordination point for substrate. An N6-(pyridoxal phosphate)lysine modification is found at K417.

It belongs to the trans-sulfuration enzymes family. It depends on pyridoxal 5'-phosphate as a cofactor.

The protein operates within secondary metabolite biosynthesis. Its function is as follows. Cystathionine gamma-synthase-like enzyme; part of the gene cluster that mediates the biosynthesis of the psychoactive metabolites ibotenic acid and muscimol. The first committed step is glutamate hydroxylation by the 2-oxoglutarate-dependent dioxygenase iboH, and the last step is decarboxylation of ibotenic acid to muscimol by the decarboxylase iboD. The order of the intermediate reactions is somewhat ambiguous. IboA likely activates the carboxylic acid at position 5 to introduce an amide bond, and the flavin monooxygenase iboF generates the N-O bond. There are several options for the latter step. One option is that iboF directly hydroxylates the amide nitrogen formed by iboA to produce a hydroxamic acid species. Another option is that iboF hydroxylates an external N-containing compound, whose resulting N-O bond is subsequently introduced into the hydroxyglutamate scaffold. The paralogous PLP-dependent cystathionine gamma-synthase-like enzymes iboG1 and iboG2 are likely involved in substitution of the OH group at position 3 by the O-N moiety. The first cyclic intermediate is most probably tricholomic acid which is likely desaturated to ibotenic acid by the cytochrome P450 monooxygenase iboC. The polypeptide is Cystathionine gamma-synthase-like enzyme iboG2 (Amanita muscaria (strain Koide BX008)).